The sequence spans 63 residues: Small integral membrane protein 43 (63 aa).

Important for interaction with SLC2A1 and SLC2A3 regions lie at residues 7–29 (LLLY…FVVI) and 51–57 (HREPWGF). Residues 9 to 29 (LYLALFFFLLFLLFLLLFVVI) traverse the membrane as a helical segment.

Interacts with glucose transporters SLC2A1/GLUT1 and SLC2A3/GLUT3; the interactions may promote SLC2A1- and SLC2A3-mediated glucose transport to meet the energy needs of mesendoderm differentiation.

It is found in the cell membrane. Its function is as follows. Required for mesendoderm differentiation. Interacts with glucose transporters and promotes glucose uptake. Probably augments the glucose uptake capacity of glucose transporter proteins to meet the energy needs of mesendoderm differentiation. The sequence is that of Small integral membrane protein 43 from Homo sapiens (Human).